A 218-amino-acid chain; its full sequence is Glutathione S-transferase class-mu 26 kDa isozyme (218 aa).

Residues Met1–Gly83 form the GST N-terminal domain. Glutathione-binding positions include Tyr7–Trp8, Trp41–Lys45, Asn54–Leu55, and Gln67–Ser68. The 119-residue stretch at Cys85–Leu203 folds into the GST C-terminal domain. Tyr111 contacts substrate.

The protein belongs to the GST superfamily. Mu family. Homodimer. Tegument and in subtegumentary parenchymal cells. GST 26 may be actively excreted by adult worms.

It catalyses the reaction RX + glutathione = an S-substituted glutathione + a halide anion + H(+). In terms of biological role, conjugation of reduced glutathione to a wide number of exogenous and endogenous hydrophobic electrophiles. GST isoenzymes appear to play a central role in the parasite detoxification system. Other functions are also suspected including a role in increasing the solubility of haematin in the parasite gut. In Schistosoma mansoni (Blood fluke), this protein is Glutathione S-transferase class-mu 26 kDa isozyme.